Here is a 407-residue protein sequence, read N- to C-terminus: UDP-N-acetylglucosamine--N-acetylmuramyl-(pentapeptide) pyrophosphoryl-undecaprenol N-acetylglucosamine transferase (407 aa).

Positions 1-21 are disordered; that stretch reads MNNSVREPTRGRRGSPPVADA. Residues 38–40, asparagine 157, serine 228, and glutamine 324 each bind UDP-N-acetyl-alpha-D-glucosamine; that span reads TAG.

This sequence belongs to the glycosyltransferase 28 family. MurG subfamily.

It is found in the cell membrane. The enzyme catalyses di-trans,octa-cis-undecaprenyl diphospho-N-acetyl-alpha-D-muramoyl-L-alanyl-D-glutamyl-meso-2,6-diaminopimeloyl-D-alanyl-D-alanine + UDP-N-acetyl-alpha-D-glucosamine = di-trans,octa-cis-undecaprenyl diphospho-[N-acetyl-alpha-D-glucosaminyl-(1-&gt;4)]-N-acetyl-alpha-D-muramoyl-L-alanyl-D-glutamyl-meso-2,6-diaminopimeloyl-D-alanyl-D-alanine + UDP + H(+). Its pathway is cell wall biogenesis; peptidoglycan biosynthesis. Functionally, cell wall formation. Catalyzes the transfer of a GlcNAc subunit on undecaprenyl-pyrophosphoryl-MurNAc-pentapeptide (lipid intermediate I) to form undecaprenyl-pyrophosphoryl-MurNAc-(pentapeptide)GlcNAc (lipid intermediate II). This Mycobacterium leprae (strain TN) protein is UDP-N-acetylglucosamine--N-acetylmuramyl-(pentapeptide) pyrophosphoryl-undecaprenol N-acetylglucosamine transferase.